We begin with the raw amino-acid sequence, 260 residues long: Purine nucleoside phosphorylase XF_0940 (260 aa).

Residues His79, Cys120, and His137 each contribute to the Zn(2+) site.

The protein belongs to the purine nucleoside phosphorylase YfiH/LACC1 family. Homodimer. Requires Cu(2+) as cofactor. Zn(2+) is required as a cofactor.

The enzyme catalyses adenosine + phosphate = alpha-D-ribose 1-phosphate + adenine. The catalysed reaction is S-methyl-5'-thioadenosine + phosphate = 5-(methylsulfanyl)-alpha-D-ribose 1-phosphate + adenine. It carries out the reaction inosine + phosphate = alpha-D-ribose 1-phosphate + hypoxanthine. It catalyses the reaction adenosine + H2O + H(+) = inosine + NH4(+). Its function is as follows. Purine nucleoside enzyme that catalyzes the phosphorolysis of adenosine and inosine nucleosides, yielding D-ribose 1-phosphate and the respective free bases, adenine and hypoxanthine. Also catalyzes the phosphorolysis of S-methyl-5'-thioadenosine into adenine and S-methyl-5-thio-alpha-D-ribose 1-phosphate. Also has adenosine deaminase activity. This Xylella fastidiosa (strain 9a5c) protein is Purine nucleoside phosphorylase XF_0940.